Consider the following 326-residue polypeptide: Target of rapamycin complex subunit lst8 (326 aa).

WD repeat units lie at residues 1–37, 40–80, 83–122, 126–165, 168–207, 218–257, and 268–309; these read MNVNQGTVGSDPVILATAGYDHTVRFWQAHSGICTRT, HQDS…PVIN, GVSKNITSVGFHEDGRWMYTGGEDCMARIWDLRSRNLQCQ, QVNAPINCVCLHPNQAELIVGDQSGVIHIWDLKTDHNEQL, EPDVSVNSVHIDPDASYMAAVNSSGNCYVWNLAGGMGDEV, AHKRYSLRCKFSPDSTLLATCSADQTCKIWRTSNFSLMTE, and TSRG…REYS.

It belongs to the WD repeat LST8 family. In terms of assembly, part of the mechanistic target of rapamycin complex 1 (mTORC1) which contains MTOR, MLST8 and RPTOR. Component of the mechanistic target of rapamycin complex 2 (mTORC2), consisting in two heterotretramers composed of MTOR, MLST8, RICTOR and MAPKAP1/SIN1.

Its subcellular location is the lysosome membrane. The protein resides in the cytoplasm. Functionally, subunit of both mTORC1 and mTORC2, which regulates cell growth and survival in response to nutrient and hormonal signals. mTORC1 is activated in response to growth factors or amino acids. In response to nutrients, mTORC1 is recruited to the lysosome membrane and promotes protein, lipid and nucleotide synthesis by phosphorylating several substrates, such as ribosomal protein S6 kinase (RPS6KB1 and RPS6KB2) and EIF4EBP1 (4E-BP1). In the same time, it inhibits catabolic pathways by phosphorylating the autophagy initiation components ULK1 and ATG13, as well as transcription factor TFEB, a master regulators of lysosomal biogenesis and autophagy. The mTORC1 complex is inhibited in response to starvation and amino acid depletion. Within mTORC1, MLST8 interacts directly with MTOR and enhances its kinase activity. In nutrient-poor conditions, stabilizes the MTOR-RPTOR interaction and favors RPTOR-mediated inhibition of MTOR activity. As part of the mTORC2 complex, transduces signals from growth factors to pathways involved in proliferation, cytoskeletal organization, lipogenesis and anabolic output. mTORC2 is also activated by growth factors, but seems to be nutrient-insensitive. In response to growth factors, mTORC2 phosphorylates and activates AGC protein kinase family members, including AKT (AKT1, AKT2 and AKT3), PKC (PRKCA, PRKCB and PRKCE) and SGK1. mTORC2 functions upstream of Rho GTPases to regulate the actin cytoskeleton, probably by activating one or more Rho-type guanine nucleotide exchange factors. mTORC2 promotes the serum-induced formation of stress-fibers or F-actin. Within mTORC2, MLST8 acts as a bridge between MAPKAP1/SIN1 and MTOR. The sequence is that of Target of rapamycin complex subunit lst8 (mlst8) from Danio rerio (Zebrafish).